The primary structure comprises 405 residues: Prenyltransferase phqA (405 aa).

Dimethylallyl diphosphate-binding residues include Tyr-195, Lys-262, and Gln-332.

This sequence belongs to the tryptophan dimethylallyltransferase family.

It participates in alkaloid biosynthesis. In terms of biological role, prenyltransferase; part of the gene cluster that mediates the biosynthesis of paraherquamide, a fungal indole alkaloid that belongs to a family of natural products containing a characteristic bicyclo[2.2.2]diazaoctane core. The first steps in the biosynthesis of paraherquamide is the production of the beta-methyl-proline precursor from L-isoleucine. They require oxidation of a terminally hydroxylated L-isoleucine to the corresponding aldehyde by enzymes which have still to be identified. Spontaneous cyclization and dehydration would yield the 4-methyl pyrolline-5-carboxylic acid, which is then reduced by the pyrroline-5-carboxylate reductase phqD leading to the beta-methyl-proline precursor. The next step of paraherquamide biosynthesis involves coupling of beta-methyl-proline and L-tryptophan by the bimodular NRPS phqB, to produce a monooxopiperazine intermediate. The reductase (R) domain of phqB utilizes NADPH for hydride transfer to reduce the thioester bond of the T domain-tethered linear dipeptide to a hemithioaminal intermediate, which spontaneously cleaves the C-S bond to release the aldehyde product. This compound undergoes spontaneous cyclization and dehydration to give a dienamine which is reverse prenylated at C-2 by the reverse prenyltransferase phqJ. The other prenyltransferase present in the cluster, phqI may be a redundant gene in the pathway. During biosynthetic assembly, the key step to produce the polycyclic core is catalyzed by the bifunctional reductase and intramolecular [4+2] Diels-Alderase, phqE, resulting in formation of the [2.2.2] diazaoctane intermediate preparaherquamide. Following formation of preparaherquamide, an indole 2,3-epoxidation-initiated pinacol-like rearrangement is catalyzed by the phqK FAD-dependent monooxygenase. The prenyltransferase phqA, the cytochrome P450 monooxygenase phqL, and the FAD-linked oxidoreductase phqH (or the cytochrome P450 monooxygenase phqM), are proposed to be involved in the formation of the pyran ring. The FAD-dependent monooxygenase phqK is likely responsible for generation of the spiro-oxindole, and the N-methylation is likely mediated by the phqN methyltransferase leading to the isolable natural product paraherquamide F. However, the order of these biosynthetic steps has still to be determined. In late-stage paraherquamide biosynthesis, the third P450 monooxygenase, phqO, is probably responsible for the C-14 hydroxylation, transforming paraherquamide F to paraherquamide G, and paraherquamide E to the final product paraherquamide A. The expansion from the 6-membered ring pyran (in paraherquamides F and G) to the 7-membered dioxepin ring (in paraherquamides A and E) represents a poorly understood but intriguing process that probably involves the 2-oxoglutarate-dependent dioxygenase phqC. Finally, the remaining members of the paraherquamide cluster, including phqI as well as phqM (or phqH), do not have a clearly prescribed role and appear to be redundant. This chain is Prenyltransferase phqA, found in Penicillium fellutanum.